A 246-amino-acid chain; its full sequence is MAVRAQFENSNEVGVFSTLTNSYALVAVGASENFYSVFEAELQDVIPICRTTIAGTRIIGRLTAGNRKGLLVPTTTSDQELQHLRNSLPDDVRIQRIEERLSALGNVIVCNDHTALIHPDLERETEEIIADVLGVEVFRQTIADNVLVGSYMALSNQGGLVHPKTSIQDQDELSSLLQVPLVAGSVNRGSNVIGGGMVVNDWMAVTGLDTTAPELSVIESVFRLGEGAAPGQINSSLKDTMVESFY.

A phosphoserine; by CK1 mark is found at S174 and S175.

Belongs to the eIF-6 family. As to quaternary structure, monomer. Associates with the 60S ribosomal subunit. Phosphorylation at Ser-174 and Ser-175 promotes nuclear export.

Its subcellular location is the cytoplasm. It localises to the nucleus. The protein localises to the nucleolus. In terms of biological role, binds to the 60S ribosomal subunit and prevents its association with the 40S ribosomal subunit to form the 80S initiation complex in the cytoplasm. Is also involved in ribosome biogenesis. Associates with pre-60S subunits in the nucleus and is involved in its nuclear export. This is Eukaryotic translation initiation factor 6 (tif-6) from Neurospora crassa (strain ATCC 24698 / 74-OR23-1A / CBS 708.71 / DSM 1257 / FGSC 987).